We begin with the raw amino-acid sequence, 556 residues long: 2-succinyl-5-enolpyruvyl-6-hydroxy-3-cyclohexene-1-carboxylate synthase (556 aa).

Belongs to the TPP enzyme family. MenD subfamily. In terms of assembly, homodimer. Mg(2+) serves as cofactor. Mn(2+) is required as a cofactor. The cofactor is thiamine diphosphate.

It carries out the reaction isochorismate + 2-oxoglutarate + H(+) = 5-enolpyruvoyl-6-hydroxy-2-succinyl-cyclohex-3-ene-1-carboxylate + CO2. It participates in quinol/quinone metabolism; 1,4-dihydroxy-2-naphthoate biosynthesis; 1,4-dihydroxy-2-naphthoate from chorismate: step 2/7. It functions in the pathway quinol/quinone metabolism; menaquinone biosynthesis. Its function is as follows. Catalyzes the thiamine diphosphate-dependent decarboxylation of 2-oxoglutarate and the subsequent addition of the resulting succinic semialdehyde-thiamine pyrophosphate anion to isochorismate to yield 2-succinyl-5-enolpyruvyl-6-hydroxy-3-cyclohexene-1-carboxylate (SEPHCHC). In Shigella sonnei (strain Ss046), this protein is 2-succinyl-5-enolpyruvyl-6-hydroxy-3-cyclohexene-1-carboxylate synthase.